The sequence spans 241 residues: Triosephosphate isomerase (241 aa).

9 to 11 (NWK) serves as a coordination point for substrate. His96 serves as the catalytic Electrophile. Glu165 (proton acceptor) is an active-site residue. Residues Gly171, Ser204, and 225 to 226 (GG) contribute to the substrate site.

The protein belongs to the triosephosphate isomerase family. Homodimer.

The protein localises to the cytoplasm. It catalyses the reaction D-glyceraldehyde 3-phosphate = dihydroxyacetone phosphate. It participates in carbohydrate biosynthesis; gluconeogenesis. Its pathway is carbohydrate degradation; glycolysis; D-glyceraldehyde 3-phosphate from glycerone phosphate: step 1/1. In terms of biological role, involved in the gluconeogenesis. Catalyzes stereospecifically the conversion of dihydroxyacetone phosphate (DHAP) to D-glyceraldehyde-3-phosphate (G3P). This Acaryochloris marina (strain MBIC 11017) protein is Triosephosphate isomerase.